A 162-amino-acid polypeptide reads, in one-letter code: Probable metalloprotease y4jG (162 aa).

The 139-residue stretch at 9–147 folds into the MPN domain; the sequence is TVALPRDCVS…YRLDAKANWN (139 aa). Residues His-94, His-96, and Asp-107 each contribute to the Zn(2+) site.

This sequence belongs to the peptidase M67B family.

In Sinorhizobium fredii (strain NBRC 101917 / NGR234), this protein is Probable metalloprotease y4jG.